The following is a 282-amino-acid chain: MSAGTLFVVATPIGNLDDISPRALRVLREVALVAAEDTRHSIRLFQHFGIETPLAACHEHNEREEGGRFISRLQGGEDVALISDAGTPLISDPGFHLVRQAQALGIRVVPVPGSCALIAALSAAGLPSDRFIFEGFLPAKAAGRRSRLQAVQEEPRTLIFYEAPHRLLESLADMRDVFGGERRAVLARELSKTFETIRSLPLAELHDWVASDSNQQRGECVVLVAGWQAPEGEESIGAEALRVLDLLLAELPLKKAAALAAEITGVRKNLLYQQALQRQGKS.

This sequence belongs to the methyltransferase superfamily. RsmI family.

Its subcellular location is the cytoplasm. It catalyses the reaction cytidine(1402) in 16S rRNA + S-adenosyl-L-methionine = 2'-O-methylcytidine(1402) in 16S rRNA + S-adenosyl-L-homocysteine + H(+). Functionally, catalyzes the 2'-O-methylation of the ribose of cytidine 1402 (C1402) in 16S rRNA. This Pseudomonas aeruginosa (strain ATCC 15692 / DSM 22644 / CIP 104116 / JCM 14847 / LMG 12228 / 1C / PRS 101 / PAO1) protein is Ribosomal RNA small subunit methyltransferase I.